A 27-amino-acid chain; its full sequence is Cationic protein C1 (27 aa).

The protein resides in the secreted. It is found in the nematocyst. This Bunodosoma caissarum (Sea anemone) protein is Cationic protein C1.